The following is a 62-amino-acid chain: Large ribosomal subunit protein bL33 (62 aa).

Belongs to the bacterial ribosomal protein bL33 family.

The sequence is that of Large ribosomal subunit protein bL33 from Trichodesmium erythraeum (strain IMS101).